Here is a 335-residue protein sequence, read N- to C-terminus: Glucokinase (335 aa).

An ATP-binding site is contributed by 11–16 (ADIGGT).

The protein belongs to the bacterial glucokinase family.

Its subcellular location is the cytoplasm. It carries out the reaction D-glucose + ATP = D-glucose 6-phosphate + ADP + H(+). This Xanthomonas campestris pv. campestris (strain B100) protein is Glucokinase.